Here is a 160-residue protein sequence, read N- to C-terminus: 6,7-dimethyl-8-ribityllumazine synthase (160 aa).

5-amino-6-(D-ribitylamino)uracil contacts are provided by residues Phe23, 61–63 (SFE), and 85–87 (AVI). 90-91 (DT) lines the (2S)-2-hydroxy-3-oxobutyl phosphate pocket. His93 (proton donor) is an active-site residue. A 5-amino-6-(D-ribitylamino)uracil-binding site is contributed by Phe118. Arg132 provides a ligand contact to (2S)-2-hydroxy-3-oxobutyl phosphate.

Belongs to the DMRL synthase family.

It catalyses the reaction (2S)-2-hydroxy-3-oxobutyl phosphate + 5-amino-6-(D-ribitylamino)uracil = 6,7-dimethyl-8-(1-D-ribityl)lumazine + phosphate + 2 H2O + H(+). The protein operates within cofactor biosynthesis; riboflavin biosynthesis; riboflavin from 2-hydroxy-3-oxobutyl phosphate and 5-amino-6-(D-ribitylamino)uracil: step 1/2. Functionally, catalyzes the formation of 6,7-dimethyl-8-ribityllumazine by condensation of 5-amino-6-(D-ribitylamino)uracil with 3,4-dihydroxy-2-butanone 4-phosphate. This is the penultimate step in the biosynthesis of riboflavin. This is 6,7-dimethyl-8-ribityllumazine synthase from Parasynechococcus marenigrum (strain WH8102).